The sequence spans 249 residues: Tumor necrosis factor receptor superfamily member 13B (249 aa).

At 1–128 the chain is on the extracellular side; sequence MAMAFCPKDQ…LSSDQLTLYC (128 aa). 2 TNFR-Cys repeats span residues 5-38 and 42-76; these read FCPK…TDFC and NCRK…AHFC. Intrachain disulfides connect Cys6/Cys19, Cys22/Cys34, Cys26/Cys38, Cys43/Cys58, Cys61/Cys72, and Cys65/Cys76. A disordered region spans residues 86–116; sequence LQPELGRPQAGEVEVRSDNSGRHQGSEHGPG. The span at 98-111 shows a compositional bias: basic and acidic residues; it reads VEVRSDNSGRHQGS. A helical; Signal-anchor for type III membrane protein membrane pass occupies residues 129 to 149; it reads TLGVCLCAIFCCFLVALASFL. Over 150–249 the chain is Cytoplasmic; that stretch reads RRRGEPLPSQ…ASTGDARPAT (100 aa). Positions 156-176 are disordered; that stretch reads LPSQPAGPRGSQANSPHAHRP.

In terms of assembly, binds TRAF2, TRAF5 and TRAF6. Binds the NH2-terminal domain of CAMLG with its C-terminus.

The protein localises to the membrane. Functionally, receptor for TNFSF13/APRIL and TNFSF13B/TALL1/BAFF/BLYS that binds both ligands with similar high affinity. Mediates calcineurin-dependent activation of NF-AT, as well as activation of NF-kappa-B and AP-1. Involved in the stimulation of B- and T-cell function and the regulation of humoral immunity. In Mus musculus (Mouse), this protein is Tumor necrosis factor receptor superfamily member 13B (Tnfrsf13b).